The following is a 377-amino-acid chain: 1,3,6,8-tetrahydroxynaphthalene synthase (377 aa).

Residue Cys164 is part of the active site.

It belongs to the thiolase-like superfamily. Chalcone/stilbene synthases family. In terms of assembly, homodimer.

It catalyses the reaction 5 malonyl-CoA + 5 H(+) = naphthalene-1,3,6,8-tetrol + 5 CO2 + 5 CoA + H2O. The protein operates within pigment biosynthesis; melanin biosynthesis. Its function is as follows. Involved in the biosynthesis of melanin but also various secondary metabolites containing a naphthoquinone ring. Catalyzes the iterative condensation of five CoA-linked malonyl units to form a pentaketide intermediate. THNS subsequently catalyzes the dual intramolecular Claisen and aldol condensations of this linear intermediate to produce the fused ring of 1,3,6,8-tetrahydroxynaphthalene (THN). In Streptomyces peucetius subsp. caesius, this protein is 1,3,6,8-tetrahydroxynaphthalene synthase.